Reading from the N-terminus, the 179-residue chain is MTAAHADLQAEFLEMPEGLRIDRPDVADGSALWRIAKDSKTLDLNSSYSYLLWCRDFAGTTAVARAADGTPVGFITAYVRPERPHTLLVWQVAVDAAYRGRGLAARMLDGLTARVTDEYGVTGIETTISPGNTASERLFTSYAQRHGADLEREVLFEAGLFPDAPHDPEVLYRIGPLSH.

The region spanning 19–174 is the N-acetyltransferase domain; the sequence is LRIDRPDVAD…PHDPEVLYRI (156 aa).

This sequence belongs to the acetyltransferase family. EctA subfamily.

The enzyme catalyses L-2,4-diaminobutanoate + acetyl-CoA = (2S)-4-acetamido-2-aminobutanoate + CoA + H(+). Its pathway is amine and polyamine biosynthesis; ectoine biosynthesis; L-ectoine from L-aspartate 4-semialdehyde: step 2/3. Its function is as follows. Catalyzes the acetylation of L-2,4-diaminobutyrate (DABA) to gamma-N-acetyl-alpha,gamma-diaminobutyric acid (ADABA) with acetyl coenzyme A. This chain is L-2,4-diaminobutyric acid acetyltransferase (ectA), found in Streptomyces avermitilis (strain ATCC 31267 / DSM 46492 / JCM 5070 / NBRC 14893 / NCIMB 12804 / NRRL 8165 / MA-4680).